Consider the following 593-residue polypeptide: SPI-1 type 3 secretion system translocon protein SctE (593 aa).

Coiled coils occupy residues 151–208 and 287–314; these read DTAK…ATDA and EGRQAEMEKKSAEFQEETRKAEETNRIM. Transmembrane regions (helical) follow at residues 330–350 and 409–429; these read VVAAVFTGGASLALAAVGLAV and IVGAIVAAIAMVAVIVVVAVV.

The protein belongs to the SctE/SipB/YopB family. The core secretion machinery of the T3SS is composed of approximately 20 different proteins, including cytoplasmic components, a base, an export apparatus and a needle. This subunit is involved in the formation of a pore, called the translocon, in host membrane.

Its subcellular location is the secreted. The protein localises to the host membrane. The protein resides in the host cell. In terms of biological role, component of the type III secretion system 1 (SPI-1 T3SS), also called injectisome, which is used to inject bacterial effector proteins into eukaryotic host cells. SipB/SctE1 and SipC/SctB are inserted into the host membrane where they form a pore and allow the translocation of effector proteins into the cytosol of target cells. Induces macrophage apoptosis either by binding and activating the proapoptotic enzyme caspase-1 (caspase-1 dependent), resulting in the release of interleukin-1 beta active form, or by disrupting mitochondria and inducing autophagy (caspase-1 independent). The former is dependent of its membrane-fusion activity. The chain is SPI-1 type 3 secretion system translocon protein SctE from Salmonella typhi.